The sequence spans 1111 residues: Isoleucine--tRNA ligase (1111 aa).

A 'HIGH' region motif is present at residues 52-62 (PFANGLPHYGH). The 'KMSKS' region signature appears at 645–649 (KLSKR). Residue lysine 648 coordinates ATP.

This sequence belongs to the class-I aminoacyl-tRNA synthetase family. IleS type 2 subfamily. In terms of assembly, monomer. Zn(2+) serves as cofactor.

The protein resides in the cytoplasm. It catalyses the reaction tRNA(Ile) + L-isoleucine + ATP = L-isoleucyl-tRNA(Ile) + AMP + diphosphate. Catalyzes the attachment of isoleucine to tRNA(Ile). As IleRS can inadvertently accommodate and process structurally similar amino acids such as valine, to avoid such errors it has two additional distinct tRNA(Ile)-dependent editing activities. One activity is designated as 'pretransfer' editing and involves the hydrolysis of activated Val-AMP. The other activity is designated 'posttransfer' editing and involves deacylation of mischarged Val-tRNA(Ile). In Wolbachia pipientis wMel, this protein is Isoleucine--tRNA ligase.